Here is a 148-residue protein sequence, read N- to C-terminus: Large ribosomal subunit protein bL9 (148 aa).

Belongs to the bacterial ribosomal protein bL9 family.

In terms of biological role, binds to the 23S rRNA. This is Large ribosomal subunit protein bL9 from Staphylococcus saprophyticus subsp. saprophyticus (strain ATCC 15305 / DSM 20229 / NCIMB 8711 / NCTC 7292 / S-41).